The chain runs to 85 residues: Cell division topological specificity factor (85 aa).

The protein belongs to the MinE family.

In terms of biological role, prevents the cell division inhibition by proteins MinC and MinD at internal division sites while permitting inhibition at polar sites. This ensures cell division at the proper site by restricting the formation of a division septum at the midpoint of the long axis of the cell. The sequence is that of Cell division topological specificity factor from Xylella fastidiosa (strain M12).